Consider the following 618-residue polypeptide: DNA mismatch repair protein MutL (618 aa).

The span at glutamate 367–arginine 378 shows a compositional bias: low complexity. The tract at residues glutamate 367–glycine 402 is disordered. Residues glycine 382–threonine 392 are compositionally biased toward gly residues.

The protein belongs to the DNA mismatch repair MutL/HexB family.

In terms of biological role, this protein is involved in the repair of mismatches in DNA. It is required for dam-dependent methyl-directed DNA mismatch repair. May act as a 'molecular matchmaker', a protein that promotes the formation of a stable complex between two or more DNA-binding proteins in an ATP-dependent manner without itself being part of a final effector complex. In Salmonella choleraesuis (strain SC-B67), this protein is DNA mismatch repair protein MutL.